The sequence spans 414 residues: Putative F-box/kelch-repeat protein At1g20940 (414 aa).

The F-box domain maps to 13-65 (SSIINDLPLDLLDEILFRLEPKSMAMMRCTNNSIKSYLSDPRFGPEYPSWVRP). Kelch repeat units lie at residues 281–328 (LTLI…MYDG) and 331–378 (LVVR…KLTP).

Interacts with DEK3.

The protein operates within protein modification; protein ubiquitination. Its function is as follows. Probable component of an E3 ubiquitin ligase complex. The chain is Putative F-box/kelch-repeat protein At1g20940 from Arabidopsis thaliana (Mouse-ear cress).